Here is a 325-residue protein sequence, read N- to C-terminus: MKTIAFDVMGNDFGPQAAVQASLEFVQKNPDFQIILVGDKKEIEKFTKETSQIKILESPNIASSKDGLRQVSKMENSMNSALDLVVEKKADAVLSSGDSGAYLTSALLKVKRLKGILRPAFMPIFPTIVKDKKILVLDVGANLETKVEYLIQWTKLASIFSNKILKVKNPKCALVNIGVEDYKGFDFHKQANEELKQSNANYIGFLEPRNILDGKVDVAVVDGYGGNLILKSMEGAVLALKKVIKESITKTFFRKILALFLKKAFKDAAERLDYRNVGAAWVLGLNGIVVKSHGSNDFKAYLGALEQVKQGINAKVIDVFRETLE.

It belongs to the PlsX family. In terms of assembly, homodimer. Probably interacts with PlsY.

It is found in the cytoplasm. The enzyme catalyses a fatty acyl-[ACP] + phosphate = an acyl phosphate + holo-[ACP]. It functions in the pathway lipid metabolism; phospholipid metabolism. In terms of biological role, catalyzes the reversible formation of acyl-phosphate (acyl-PO(4)) from acyl-[acyl-carrier-protein] (acyl-ACP). This enzyme utilizes acyl-ACP as fatty acyl donor, but not acyl-CoA. This is Phosphate acyltransferase from Mycoplasmopsis pulmonis (strain UAB CTIP) (Mycoplasma pulmonis).